Here is a 185-residue protein sequence, read N- to C-terminus: uncharacterized protein (185 aa).

2 helical membrane-spanning segments follow: residues 1–19 and 105–125; these read MLNI…TSSA and AGFI…TMDV.

The protein localises to the membrane. This is an uncharacterized protein from Caenorhabditis elegans.